A 126-amino-acid chain; its full sequence is Adrenocorticotropic hormone receptor (126 aa).

A helical membrane pass occupies residues 1-25; the sequence is VLPEEIFFTISIVGVLENLIVLLAV. The Cytoplasmic segment spans residues 26 to 34; that stretch reads FKNKNLQAP. The helical transmembrane segment at 35–55 threads the bilayer; it reads MYFFICSLAISDMLGSLYKIL. Over 56-80 the chain is Extracellular; it reads ENILIILRNMGYLKPRGSFETTADD. The helical transmembrane segment at 81–102 threads the bilayer; that stretch reads IIDSLFVLSLLGAIFSLSVIAA. Residues 103–123 lie on the Cytoplasmic side of the membrane; that stretch reads DRYITIFHALRYHSIVTMRRT. A helical membrane pass occupies residues 124–126; that stretch reads VVV.

It belongs to the G-protein coupled receptor 1 family. As to quaternary structure, interacts with MRAP; increasing ligand-sensitivity and generation of cAMP. Interacts with MRAP2; competing with MRAP for binding to MC2R and impairing the binding of corticotropin (ACTH).

The protein resides in the cell membrane. Receptor for corticotropin (ACTH). This receptor is mediated by G proteins (G(s)) which activate adenylate cyclase (cAMP). The protein is Adrenocorticotropic hormone receptor (MC2R) of Papio hamadryas (Hamadryas baboon).